Here is a 494-residue protein sequence, read N- to C-terminus: MKKYVLALDQGTTSCRAILFDRESQIVGVAQKEFTQIYPQPGWVEHDPEEVWSTQYGVIAELLARYQVTSEEIAGIGITNQRETTVVWDKHTGKSVTNAIVWQCRRTAPLCDELKMKGLEPLFKEKTGLVLDAYFSGTKIRWILDRVPGAQEKAEKGELLFGTMDTWLVWNLTKGRIHVTDYSNASRTLLYNIKTLAWDPDLLQVLNIPLAMLPEVKPSSTIYGETAAEGLFGHPIPIAGIAGDQQAALFGQACFAPGMAKNTYGTGCFMLLNTGEELYESRHGLISTIAWGLDEKVIYALEGSVFMAGAVMQWLRDELKLIETAGDSEYFAGKVADNGGVYLVPAFTGLGAPYWDMDARGAIVGLTRGSNKNHIIRAALESMAYQTRDILEAMEADSQLPLQLLKVDGGAVVNNLLMQFQADILGVEVERPHCIETTALGAAYLAGLAIGFWSSKEELRDKAKMERSFKPQMAEERKEKYYQGWHKAVRQIME.

Residue Thr12 coordinates ADP. ATP-binding residues include Thr12, Thr13, and Ser14. Thr12 contacts sn-glycerol 3-phosphate. Arg16 provides a ligand contact to ADP. Residues Arg82, Glu83, Tyr134, and Asp244 each coordinate sn-glycerol 3-phosphate. 5 residues coordinate glycerol: Arg82, Glu83, Tyr134, Asp244, and Gln245. Positions 266 and 309 each coordinate ADP. 4 residues coordinate ATP: Thr266, Gly309, Gln313, and Gly410. Gly410 and Asn414 together coordinate ADP.

The protein belongs to the FGGY kinase family. In terms of assembly, homotetramer and homodimer (in equilibrium).

It carries out the reaction glycerol + ATP = sn-glycerol 3-phosphate + ADP + H(+). It participates in polyol metabolism; glycerol degradation via glycerol kinase pathway; sn-glycerol 3-phosphate from glycerol: step 1/1. Its activity is regulated as follows. Activated by phosphorylation and inhibited by fructose 1,6-bisphosphate (FBP). Its function is as follows. Key enzyme in the regulation of glycerol uptake and metabolism. Catalyzes the phosphorylation of glycerol to yield sn-glycerol 3-phosphate. The chain is Glycerol kinase from Desulfitobacterium hafniense (strain DSM 10664 / DCB-2).